Consider the following 130-residue polypeptide: Protein MGF 360-1L (130 aa).

The next 3 helical transmembrane spans lie at 4–24 (FLGFLLLSYLAIILVHDNVNC), 75–95 (IIRHCCFYLVFSIAFASCVAF), and 109–129 (LLGLLSILVWLAQPVLNQPFP).

Belongs to the asfivirus MGF 110 family.

It is found in the host membrane. Functionally, plays a role in virus cell tropism, and may be required for efficient virus replication in macrophages. This Ornithodoros (relapsing fever ticks) protein is Protein MGF 360-1L.